We begin with the raw amino-acid sequence, 453 residues long: Tubulin beta-2 chain (453 aa).

Positions 11, 71, 140, 144, 145, 146, 206, and 228 each coordinate GTP. Glu71 provides a ligand contact to Mg(2+).

The protein belongs to the tubulin family. As to quaternary structure, dimer of alpha and beta chains. A typical microtubule is a hollow water-filled tube with an outer diameter of 25 nm and an inner diameter of 15 nM. Alpha-beta heterodimers associate head-to-tail to form protofilaments running lengthwise along the microtubule wall with the beta-tubulin subunit facing the microtubule plus end conferring a structural polarity. Microtubules usually have 13 protofilaments but different protofilament numbers can be found in some organisms and specialized cells. The cofactor is Mg(2+).

The protein resides in the cytoplasm. It localises to the cytoskeleton. In terms of biological role, tubulin is the major constituent of microtubules, a cylinder consisting of laterally associated linear protofilaments composed of alpha- and beta-tubulin heterodimers. Microtubules grow by the addition of GTP-tubulin dimers to the microtubule end, where a stabilizing cap forms. Below the cap, tubulin dimers are in GDP-bound state, owing to GTPase activity of alpha-tubulin. The sequence is that of Tubulin beta-2 chain from Geotrichum candidum (Oospora lactis).